Reading from the N-terminus, the 161-residue chain is 3-hydroxyacyl-[acyl-carrier-protein] dehydratase FabZ (161 aa).

The active site involves histidine 66.

The protein belongs to the thioester dehydratase family. FabZ subfamily.

It localises to the cytoplasm. The catalysed reaction is a (3R)-hydroxyacyl-[ACP] = a (2E)-enoyl-[ACP] + H2O. Functionally, involved in unsaturated fatty acids biosynthesis. Catalyzes the dehydration of short chain beta-hydroxyacyl-ACPs and long chain saturated and unsaturated beta-hydroxyacyl-ACPs. In Gluconacetobacter diazotrophicus (strain ATCC 49037 / DSM 5601 / CCUG 37298 / CIP 103539 / LMG 7603 / PAl5), this protein is 3-hydroxyacyl-[acyl-carrier-protein] dehydratase FabZ.